Consider the following 228-residue polypeptide: LOB domain-containing protein 30 (228 aa).

In terms of domain architecture, LOB spans 16 to 118 (GPCGACKFLR…TELSYLQAHL (103 aa)). The segment at 188–228 (SNMGGGGELQALAREFIHGGQMPAQPSPGTSGSASSVIKRE) is disordered. Polar residues predominate over residues 214–228 (SPGTSGSASSVIKRE).

The protein belongs to the LOB domain-containing protein family. Expressed in roots, stems, leaves and flowers. Expressed in vascular tissues of hypocotyls, leaves, roots, developing floral organs and siliques.

Functionally, involved in the positive regulation of tracheary element (TE) differentiation. Involved in a positive feedback loop that maintains or promotes NAC030/VND7 expression that regulates TE differentiation-related genes. This is LOB domain-containing protein 30 (LBD30) from Arabidopsis thaliana (Mouse-ear cress).